The chain runs to 68 residues: ATP synthase F(0) complex subunit 8 (68 aa).

The helical transmembrane segment at 8-21 (VWPTMITPMLLTLF) threads the bilayer. An N6-acetyllysine; alternate modification is found at lysine 54. At lysine 54 the chain carries N6-succinyllysine; alternate. The residue at position 57 (lysine 57) is an N6-acetyllysine.

It belongs to the ATPase protein 8 family. In terms of assembly, component of the ATP synthase complex composed at least of ATP5F1A/subunit alpha, ATP5F1B/subunit beta, ATP5MC1/subunit c (homooctomer), MT-ATP6/subunit a, MT-ATP8/subunit 8, ATP5ME/subunit e, ATP5MF/subunit f, ATP5MG/subunit g, ATP5MK/subunit k, ATP5MJ/subunit j, ATP5F1C/subunit gamma, ATP5F1D/subunit delta, ATP5F1E/subunit epsilon, ATP5PF/subunit F6, ATP5PB/subunit b, ATP5PD/subunit d, ATP5PO/subunit OSCP. ATP synthase complex consists of a soluble F(1) head domain (subunits alpha(3) and beta(3)) - the catalytic core - and a membrane F(0) domain - the membrane proton channel (subunits c, a, 8, e, f, g, k and j). These two domains are linked by a central stalk (subunits gamma, delta, and epsilon) rotating inside the F1 region and a stationary peripheral stalk (subunits F6, b, d, and OSCP). Interacts with PRICKLE3.

It is found in the mitochondrion membrane. Its function is as follows. Subunit 8, of the mitochondrial membrane ATP synthase complex (F(1)F(0) ATP synthase or Complex V) that produces ATP from ADP in the presence of a proton gradient across the membrane which is generated by electron transport complexes of the respiratory chain. ATP synthase complex consist of a soluble F(1) head domain - the catalytic core - and a membrane F(1) domain - the membrane proton channel. These two domains are linked by a central stalk rotating inside the F(1) region and a stationary peripheral stalk. During catalysis, ATP synthesis in the catalytic domain of F(1) is coupled via a rotary mechanism of the central stalk subunits to proton translocation. In vivo, can only synthesize ATP although its ATP hydrolase activity can be activated artificially in vitro. Part of the complex F(0) domain. This is ATP synthase F(0) complex subunit 8 from Homo sapiens (Human).